A 230-amino-acid polypeptide reads, in one-letter code: Ribose-5-phosphate isomerase A (230 aa).

Substrate contacts are provided by residues 31-34 (TGST), 87-90 (DGAD), and 100-103 (KGGG). The Proton acceptor role is filled by E109. K127 provides a ligand contact to substrate.

It belongs to the ribose 5-phosphate isomerase family. As to quaternary structure, homodimer.

It catalyses the reaction aldehydo-D-ribose 5-phosphate = D-ribulose 5-phosphate. It participates in carbohydrate degradation; pentose phosphate pathway; D-ribose 5-phosphate from D-ribulose 5-phosphate (non-oxidative stage): step 1/1. Functionally, catalyzes the reversible conversion of ribose-5-phosphate to ribulose 5-phosphate. The sequence is that of Ribose-5-phosphate isomerase A from Lactobacillus delbrueckii subsp. bulgaricus (strain ATCC 11842 / DSM 20081 / BCRC 10696 / JCM 1002 / NBRC 13953 / NCIMB 11778 / NCTC 12712 / WDCM 00102 / Lb 14).